Consider the following 705-residue polypeptide: Polyribonucleotide nucleotidyltransferase (705 aa).

The Mg(2+) site is built by Asp487 and Asp493. A KH domain is found at 554-613 (PKILTMAIEPDKIRDVIGPSGKQINQIIDETGVKIDIEQDGSIFISSTDNEMNKKAKQII). The S1 motif domain maps to 623–691 (GQIYLGKVKR…RQGRVNLSRK (69 aa)).

The protein belongs to the polyribonucleotide nucleotidyltransferase family. Requires Mg(2+) as cofactor.

The protein resides in the cytoplasm. The enzyme catalyses RNA(n+1) + phosphate = RNA(n) + a ribonucleoside 5'-diphosphate. Involved in mRNA degradation. Catalyzes the phosphorolysis of single-stranded polyribonucleotides processively in the 3'- to 5'-direction. The chain is Polyribonucleotide nucleotidyltransferase from Oceanobacillus iheyensis (strain DSM 14371 / CIP 107618 / JCM 11309 / KCTC 3954 / HTE831).